The chain runs to 504 residues: Anaerobic nitric oxide reductase transcription regulator NorR (504 aa).

Asp57 is modified (4-aspartylphosphate). The region spanning 187–416 (MIGLSPGMTQ…LEHAIHRAVV (230 aa)) is the Sigma-54 factor interaction domain. ATP is bound by residues 215-222 (GETGTGKE) and 278-287 (ADNGTLFLDE). Residues 479-498 (WAACARMLETDVANLHRLAK) constitute a DNA-binding region (H-T-H motif).

It functions in the pathway nitrogen metabolism; nitric oxide reduction. In terms of biological role, required for the expression of anaerobic nitric oxide (NO) reductase, acts as a transcriptional activator for at least the norVW operon. Activation also requires sigma-54. The chain is Anaerobic nitric oxide reductase transcription regulator NorR from Escherichia coli O17:K52:H18 (strain UMN026 / ExPEC).